The sequence spans 169 residues: MRGTPGDADGGGRAVYQSMCKPITGTINDLNQQVWTLQGQNLVAVPRSDSVTPVTVAVITCKYPEALEQGRGDPIYLGIQNPEMCLYCEKVGEQPTLQLKEQKIMDLYGQPEPVKPFLFYRAKTGRTSTLESVAFPDWFIASSKRDQPIILTSELGKSYNTAFELNIND.

Residues methionine 1 to glutamine 17 constitute a propeptide that is removed on maturation.

It belongs to the IL-1 family. In terms of assembly, interacts with cargo receptor TMED10; the interaction mediates the translocation from the cytoplasm into the ERGIC (endoplasmic reticulum-Golgi intermediate compartment) and thereby secretion. Post-translationally, N-terminal truncation leads to a dramatic enhancement of its activity (&gt;1000-fold). Proteolytically cleaved by cathepsin CTSG. In terms of tissue distribution, highly expressed in tissues containing epithelial cells: skin, lung, stomach and esophagus. Expressed in bronchial epithelial. In skin is expressed only in keratinocytes but not in fibroblasts, endothelial cells or melanocytes. Up-regulated in lesional psoriasis skin. Expressed in monocyte-derived dendritic cells and M1 macrophages.

Its subcellular location is the cytoplasm. The protein localises to the secreted. In terms of biological role, cytokine that binds to and signals through the IL1RL2/IL-36R receptor which in turn activates NF-kappa-B and MAPK signaling pathways in target cells. Part of the IL-36 signaling system that is thought to be present in epithelial barriers and to take part in local inflammatory response; similar to the IL-1 system with which it shares the coreceptor IL1RAP. Seems to be involved in skin inflammatory response by acting on keratinocytes, dendritic cells and indirectly on T-cells to drive tissue infiltration, cell maturation and cell proliferation. In cultured keratinocytes induces the expression of macrophage, T-cell, and neutrophil chemokines, such as CCL3, CCL4, CCL5, CCL2, CCL17, CCL22, CL20, CCL5, CCL2, CCL17, CCL22, CXCL8, CCL20 and CXCL1; also stimulates its own expression and that of the prototypic cutaneous pro-inflammatory parameters TNF-alpha, S100A7/psoriasin and inducible NOS. May play a role in pro-inflammatory responses during particular neutrophilic airway inflammation: activates mitogen-activated protein kinases and NF-kappa B in primary lung fibroblasts, and stimulates the expression of IL-8 and CXCL3 and Th17 chemokine CCL20 in lung fibroblasts. May be involved in the innate immune response to fungal pathogens, such as Aspergillus fumigatus. This is Interleukin-36 gamma from Homo sapiens (Human).